The sequence spans 339 residues: Ketol-acid reductoisomerase (NADP(+)) (339 aa).

The KARI N-terminal Rossmann domain occupies 1 to 182; the sequence is MKIYYEKDAD…GNTRAGVIET (182 aa). NADP(+) contacts are provided by residues 24–27, Ser51, Ser53, and 83–86; these read YGSQ and DEKQ. Residue His108 is part of the active site. Gly134 is a binding site for NADP(+). A KARI C-terminal knotted domain is found at 183-328; the sequence is SFREETETDL…EKLRGMMHWA (146 aa). Asp191, Glu195, Glu227, and Glu231 together coordinate Mg(2+). Ser252 contacts substrate.

The protein belongs to the ketol-acid reductoisomerase family. Mg(2+) is required as a cofactor.

It catalyses the reaction (2R)-2,3-dihydroxy-3-methylbutanoate + NADP(+) = (2S)-2-acetolactate + NADPH + H(+). The enzyme catalyses (2R,3R)-2,3-dihydroxy-3-methylpentanoate + NADP(+) = (S)-2-ethyl-2-hydroxy-3-oxobutanoate + NADPH + H(+). It participates in amino-acid biosynthesis; L-isoleucine biosynthesis; L-isoleucine from 2-oxobutanoate: step 2/4. The protein operates within amino-acid biosynthesis; L-valine biosynthesis; L-valine from pyruvate: step 2/4. In terms of biological role, involved in the biosynthesis of branched-chain amino acids (BCAA). Catalyzes an alkyl-migration followed by a ketol-acid reduction of (S)-2-acetolactate (S2AL) to yield (R)-2,3-dihydroxy-isovalerate. In the isomerase reaction, S2AL is rearranged via a Mg-dependent methyl migration to produce 3-hydroxy-3-methyl-2-ketobutyrate (HMKB). In the reductase reaction, this 2-ketoacid undergoes a metal-dependent reduction by NADPH to yield (R)-2,3-dihydroxy-isovalerate. The sequence is that of Ketol-acid reductoisomerase (NADP(+)) from Hyphomonas neptunium (strain ATCC 15444).